The primary structure comprises 440 residues: tRNA modification GTPase MnmE (440 aa).

Arg-34, Glu-94, and Arg-134 together coordinate (6S)-5-formyl-5,6,7,8-tetrahydrofolate. Positions 229–367 (GVRVVLAGPP…LVALLLDRAA (139 aa)) constitute a TrmE-type G domain. Asn-239 contributes to the K(+) binding site. Residues 239 to 244 (NAGKST), 258 to 264 (TPIAGTT), 283 to 286 (DTAG), and 348 to 350 (SAR) each bind GTP. Ser-243 serves as a coordination point for Mg(2+). Positions 258, 260, and 263 each coordinate K(+). Residue Thr-264 participates in Mg(2+) binding. Lys-440 is a (6S)-5-formyl-5,6,7,8-tetrahydrofolate binding site.

The protein belongs to the TRAFAC class TrmE-Era-EngA-EngB-Septin-like GTPase superfamily. TrmE GTPase family. As to quaternary structure, homodimer. Heterotetramer of two MnmE and two MnmG subunits. It depends on K(+) as a cofactor.

It is found in the cytoplasm. In terms of biological role, exhibits a very high intrinsic GTPase hydrolysis rate. Involved in the addition of a carboxymethylaminomethyl (cmnm) group at the wobble position (U34) of certain tRNAs, forming tRNA-cmnm(5)s(2)U34. In Rhizorhabdus wittichii (strain DSM 6014 / CCUG 31198 / JCM 15750 / NBRC 105917 / EY 4224 / RW1) (Sphingomonas wittichii), this protein is tRNA modification GTPase MnmE.